The following is a 534-amino-acid chain: Tyrosine-protein kinase Fyn (534 aa).

Gly2 carries the N-myristoyl glycine lipid modification. 2 S-palmitoyl cysteine lipidation sites follow: Cys3 and Cys6. Thr12 carries the post-translational modification Phosphothreonine; by PKC. The tract at residues 15 to 39 is disordered; that stretch reads TDERDGSLTQSSGYRYGTDPTPQHY. One can recognise an SH3 domain in the interval 82 to 143; it reads TGVTLFEALY…PSNYVAPVDS (62 aa). The 98-residue stretch at 149-246 folds into the SH2 domain; sequence WYFGKLGRKD…GLCFNLTVIA (98 aa). One can recognise a Protein kinase domain in the interval 268–521; that stretch reads LFLEQKLGQG…YLQGFLEDYF (254 aa). ATP-binding positions include 274 to 282 and Lys296; that span reads LGQGCFAEV. Asp387 (proton acceptor) is an active-site residue. A Phosphotyrosine; by autocatalysis modification is found at Tyr417. The residue at position 528 (Tyr528) is a Phosphotyrosine.

The protein belongs to the protein kinase superfamily. Tyr protein kinase family. SRC subfamily. In terms of assembly, associates through its SH3 domain, to the p85 subunit of phosphatidylinositol 3-kinase. Mn(2+) serves as cofactor. In terms of tissue distribution, thymus and spleen.

The protein resides in the cytoplasm. It localises to the nucleus. It is found in the cell membrane. Its subcellular location is the perikaryon. The enzyme catalyses L-tyrosyl-[protein] + ATP = O-phospho-L-tyrosyl-[protein] + ADP + H(+). Inhibited by phosphorylation of Tyr-528 by leukocyte common antigen and activated by dephosphorylation of this site. Tyrosine-protein kinase implicated in the control of cell growth. Plays a role in the regulation of intracellular calcium levels. Required in brain development and mature brain function with important roles in the regulation of axon growth, axon guidance, and neurite extension. Role in CNTN1-mediated signaling. The polypeptide is Tyrosine-protein kinase Fyn (FYN) (Gallus gallus (Chicken)).